Reading from the N-terminus, the 115-residue chain is Meiotically up-regulated gene 42 protein (115 aa).

Has a role in meiosis. This is Meiotically up-regulated gene 42 protein (mug42) from Schizosaccharomyces pombe (strain 972 / ATCC 24843) (Fission yeast).